The sequence spans 486 residues: Putative ankyrin repeat protein R634 (486 aa).

12 ANK repeats span residues 84-113, 114-143, 145-173, 174-203, 205-233, 234-263, 265-293, 307-336, 337-366, 367-396, 398-426, and 427-456; these read DLFKYVIEFCISGKLDSIKRLVSMGANVRE, HNDVALNRAVENGHMDIFEYLISKGADLYA, KNTLVRCASYGGNLDMVKYLISIGANFRE, NCDTPLIWACHNGHLEIVKYLVDQGADVNS, SHKSIITASKMGHLGIVKYLVSKTTNIDW, RHNYAAAFAAQNNHLEIVKYLVNEGANLEI, DGCIIRVAAKNGHLDIVKYLVSLGMEIGF, NKITPVIGSAVEGGHLSMVKYFVSIGATIK, EKNYAFVKAAEYGHLEIIKYLVSQGISLEK, KINKALIVACSKGHLEIVKYLVENGANVKT, EGLPLRQACWGNYLDIAKYLVSNGADVTS, and YDNYALKTALEKGDLETVKYFIYVGANVND.

The sequence is that of Putative ankyrin repeat protein R634 from Acanthamoeba polyphaga (Amoeba).